A 235-amino-acid polypeptide reads, in one-letter code: Thiamine import ATP-binding protein ThiQ (235 aa).

Positions 2-230 (LKLIDITWLY…QASASALLGI (229 aa)) constitute an ABC transporter domain. 32-39 (GPSGAGKS) lines the ATP pocket.

This sequence belongs to the ABC transporter superfamily. Thiamine importer (TC 3.A.1.19.1) family. As to quaternary structure, the complex is composed of two ATP-binding proteins (ThiQ), two transmembrane proteins (ThiP) and a solute-binding protein (ThiB).

It localises to the cell inner membrane. It catalyses the reaction thiamine(out) + ATP + H2O = thiamine(in) + ADP + phosphate + H(+). Functionally, part of the ABC transporter complex ThiBPQ involved in thiamine import. Responsible for energy coupling to the transport system. Is also involved in thiamine pyrophosphate (TPP) transport. The polypeptide is Thiamine import ATP-binding protein ThiQ (Salmonella typhimurium (strain LT2 / SGSC1412 / ATCC 700720)).